We begin with the raw amino-acid sequence, 199 residues long: Casparian strip membrane protein 2 (199 aa).

The Cytoplasmic segment spans residues 1 to 37; the sequence is MMRGSTEIDMPESSSVSKGTAPLIAAPMKEKGGYKKG. A helical membrane pass occupies residues 38-58; the sequence is IAIFDFILRLAAIATALAAAA. Topologically, residues 59–87 are extracellular; sequence SMGTSDETLPFFTQFFQFQASYDDLPTFQ. A helical transmembrane segment spans residues 88–108; that stretch reads FFVIAMAIVAGYLVLSLPFSI. The Cytoplasmic portion of the chain corresponds to 109 to 120; that stretch reads VAIVRPHAAGPR. Residues 121–141 form a helical membrane-spanning segment; it reads LLLIILDTVALTLNTAAGAAA. The Extracellular segment spans residues 142–173; it reads AAIVYLAHNGNSSTNWLAICQQFGDFCQKNSG. The N-linked (GlcNAc...) asparagine glycan is linked to Asn152. The helical transmembrane segment at 174-194 threads the bilayer; the sequence is AVVASFITVVIFVFLLVLSAF. Residues 195–199 are Cytoplasmic-facing; it reads ALRRH.

Belongs to the Casparian strip membrane proteins (CASP) family. In terms of assembly, homodimer and heterodimers.

It localises to the cell membrane. Regulates membrane-cell wall junctions and localized cell wall deposition. Required for establishment of the Casparian strip membrane domain (CSD) and the subsequent formation of Casparian strips, a cell wall modification of the root endodermis that determines an apoplastic barrier between the intraorganismal apoplasm and the extraorganismal apoplasm and prevents lateral diffusion. The chain is Casparian strip membrane protein 2 from Populus trichocarpa (Western balsam poplar).